Reading from the N-terminus, the 497-residue chain is Cysteine--tRNA ligase (497 aa).

Cysteine 32 contacts Zn(2+). A 'HIGH' region motif is present at residues 34-44; sequence PTVYGEGHLGH. Cysteine 228, histidine 253, and glutamate 257 together coordinate Zn(2+). Residues 285 to 289 carry the 'KMSKS' region motif; the sequence is KMGKS. Lysine 288 is a binding site for ATP.

It belongs to the class-I aminoacyl-tRNA synthetase family. Monomer. Zn(2+) is required as a cofactor.

The protein resides in the cytoplasm. The enzyme catalyses tRNA(Cys) + L-cysteine + ATP = L-cysteinyl-tRNA(Cys) + AMP + diphosphate. The polypeptide is Cysteine--tRNA ligase (Cytophaga hutchinsonii (strain ATCC 33406 / DSM 1761 / CIP 103989 / NBRC 15051 / NCIMB 9469 / D465)).